The primary structure comprises 251 residues: Squamosa promoter-binding-like protein 4 (251 aa).

The segment covering 1–15 (MDWMPPPKPTSPRSP) has biased composition (pro residues). The segment at 1–64 (MDWMPPPKPT…RAEEGGGGGG (64 aa)) is disordered. The segment covering 24-43 (AAVPGSSSGEVSAAAAAAAA) has biased composition (low complexity). Residues 65 to 142 (EVRCQVEGCG…YDHNARRRKP (78 aa)) form an SBP-type zinc finger. Residues Cys-68, Cys-73, Cys-90, His-93, Cys-109, Cys-112, His-116, and Cys-128 each contribute to the Zn(2+) site. Residues 125-141 (KRSCRRRLYDHNARRRK) carry the Bipartite nuclear localization signal motif.

As to expression, expressed in stems, leaf sheaths, and young panicles.

It localises to the nucleus. Its function is as follows. Trans-acting factor that binds specifically to the consensus nucleotide sequence 5'-TNCGTACAA-3'. May be involved in panicle development. This Oryza sativa subsp. japonica (Rice) protein is Squamosa promoter-binding-like protein 4 (SPL4).